A 483-amino-acid polypeptide reads, in one-letter code: V-type proton ATPase subunit H (483 aa).

S483 carries the post-translational modification Phosphoserine.

This sequence belongs to the V-ATPase H subunit family. As to quaternary structure, V-ATPase is a heteromultimeric enzyme made up of two complexes: the ATP-hydrolytic V1 complex and the proton translocation V0 complex. The V1 complex consists of three catalytic AB heterodimers that form a heterohexamer, three peripheral stalks each consisting of EG heterodimers, one central rotor including subunits D and F, and the regulatory subunits C and H. The proton translocation complex V0 consists of the proton transport subunit a, a ring of proteolipid subunits c9c'', rotary subunit d, subunits e and f, and the accessory subunits ATP6AP1/Ac45 and ATP6AP2/PRR. Interacts with AP2M1. In terms of tissue distribution, expressed in brain (at protein level).

Its subcellular location is the cytoplasmic vesicle. The protein resides in the clathrin-coated vesicle membrane. In terms of biological role, subunit of the V1 complex of vacuolar(H+)-ATPase (V-ATPase), a multisubunit enzyme composed of a peripheral complex (V1) that hydrolyzes ATP and a membrane integral complex (V0) that translocates protons. V-ATPase is responsible for acidifying and maintaining the pH of intracellular compartments and in some cell types, is targeted to the plasma membrane, where it is responsible for acidifying the extracellular environment. Subunit H is essential for V-ATPase activity, but not for the assembly of the complex. Involved in the endocytosis mediated by clathrin-coated pits, required for the formation of endosomes. This is V-type proton ATPase subunit H (ATP6V1H) from Bos taurus (Bovine).